The primary structure comprises 160 residues: Cytochrome b6-f complex subunit 4 (160 aa).

3 helical membrane passes run 36–56 (LLYIFPVVILGTIACVVGLAV), 95–115 (LLGIALQTLVPLGLMLVPFIE), and 128–148 (VAMTVFLFGTFTTIYLGIGAA).

It belongs to the cytochrome b family. PetD subfamily. In terms of assembly, the 4 large subunits of the cytochrome b6-f complex are cytochrome b6, subunit IV (17 kDa polypeptide, PetD), cytochrome f and the Rieske protein, while the 4 small subunits are PetG, PetL, PetM and PetN. The complex functions as a dimer.

The protein resides in the cellular thylakoid membrane. In terms of biological role, component of the cytochrome b6-f complex, which mediates electron transfer between photosystem II (PSII) and photosystem I (PSI), cyclic electron flow around PSI, and state transitions. The sequence is that of Cytochrome b6-f complex subunit 4 from Synechococcus sp. (strain CC9902).